The chain runs to 782 residues: Nezukol synthase KSL3 (782 aa).

Mg(2+) contacts are provided by Asp-529, Asp-533, Asn-677, and Glu-685. A DDXXD motif motif is present at residues 529–533 (DDVFD).

The protein belongs to the terpene synthase family. Mg(2+) is required as a cofactor. Highly expressed in leaves, and, at low levels, in stems, but barely in roots and flowers.

The catalysed reaction is (+)-copalyl diphosphate = miltiradiene + diphosphate. The enzyme catalyses (+)-copalyl diphosphate + H2O = nezukol + diphosphate. The protein operates within secondary metabolite biosynthesis; terpenoid biosynthesis. Involved in the biosynthesis of ent-kaurene diterpenoids natural products such as oridonin, miltiradiene, eriocalyxin B and nezukol, known to exhibit antitumor, anti-inflammatory and antibacterial activities. Catalyzes the conversion of (+)-copalyl diphosphate ((+)-CPP) to nezukol and miltiradiene. The reaction mechanism proceeds via the ionization of the diphosphate group of (+)-CPP, followed by formation of an intermediary pimar-15-en-8-yl(+) carbocation and neutralization of the carbocation by water capture at C-8 to yield nezukol. Can interact with ent-copalyl diphosphate (ent-CPP) but seems unable to use it as substrate. In Isodon rubescens (Rabdosia rubescens), this protein is Nezukol synthase KSL3.